We begin with the raw amino-acid sequence, 209 residues long: Transcription antitermination protein NusB (209 aa).

This sequence belongs to the NusB family.

In terms of biological role, involved in transcription antitermination. Required for transcription of ribosomal RNA (rRNA) genes. Binds specifically to the boxA antiterminator sequence of the ribosomal RNA (rrn) operons. This Cyanothece sp. (strain PCC 7425 / ATCC 29141) protein is Transcription antitermination protein NusB.